Consider the following 471-residue polypeptide: UDP-N-acetylmuramate--L-alanine ligase (471 aa).

114-120 is an ATP binding site; the sequence is GTHGKTT.

Belongs to the MurCDEF family.

Its subcellular location is the cytoplasm. It catalyses the reaction UDP-N-acetyl-alpha-D-muramate + L-alanine + ATP = UDP-N-acetyl-alpha-D-muramoyl-L-alanine + ADP + phosphate + H(+). The protein operates within cell wall biogenesis; peptidoglycan biosynthesis. Its function is as follows. Cell wall formation. The chain is UDP-N-acetylmuramate--L-alanine ligase from Rhizobium meliloti (strain 1021) (Ensifer meliloti).